Consider the following 508-residue polypeptide: Maturase K (508 aa).

Belongs to the intron maturase 2 family. MatK subfamily.

The protein localises to the plastid. It is found in the chloroplast. In terms of biological role, usually encoded in the trnK tRNA gene intron. Probably assists in splicing its own and other chloroplast group II introns. The chain is Maturase K from Marathrum schiedeanum.